A 65-amino-acid chain; its full sequence is Large ribosomal subunit protein bL35 (65 aa).

Belongs to the bacterial ribosomal protein bL35 family.

This chain is Large ribosomal subunit protein bL35, found in Polynucleobacter asymbioticus (strain DSM 18221 / CIP 109841 / QLW-P1DMWA-1) (Polynucleobacter necessarius subsp. asymbioticus).